Consider the following 376-residue polypeptide: Queuine tRNA-ribosyltransferase (376 aa).

Residue Asp-93 is the Proton acceptor of the active site. Residues 93-97, Asp-147, Gln-190, and Gly-217 contribute to the substrate site; that span reads DSGGF. An RNA binding region spans residues 248 to 254; the sequence is GVGKPDD. Asp-267 (nucleophile) is an active-site residue. The Zn(2+) site is built by Cys-305, Cys-307, Cys-310, and His-336.

This sequence belongs to the queuine tRNA-ribosyltransferase family. As to quaternary structure, homodimer. Within each dimer, one monomer is responsible for RNA recognition and catalysis, while the other monomer binds to the replacement base PreQ1. Requires Zn(2+) as cofactor.

The catalysed reaction is 7-aminomethyl-7-carbaguanine + guanosine(34) in tRNA = 7-aminomethyl-7-carbaguanosine(34) in tRNA + guanine. The protein operates within tRNA modification; tRNA-queuosine biosynthesis. Catalyzes the base-exchange of a guanine (G) residue with the queuine precursor 7-aminomethyl-7-deazaguanine (PreQ1) at position 34 (anticodon wobble position) in tRNAs with GU(N) anticodons (tRNA-Asp, -Asn, -His and -Tyr). Catalysis occurs through a double-displacement mechanism. The nucleophile active site attacks the C1' of nucleotide 34 to detach the guanine base from the RNA, forming a covalent enzyme-RNA intermediate. The proton acceptor active site deprotonates the incoming PreQ1, allowing a nucleophilic attack on the C1' of the ribose to form the product. After dissociation, two additional enzymatic reactions on the tRNA convert PreQ1 to queuine (Q), resulting in the hypermodified nucleoside queuosine (7-(((4,5-cis-dihydroxy-2-cyclopenten-1-yl)amino)methyl)-7-deazaguanosine). The polypeptide is Queuine tRNA-ribosyltransferase (Jannaschia sp. (strain CCS1)).